The sequence spans 803 residues: Volume-regulated anion channel subunit LRRC8B (803 aa).

At 1-25 (MITLTELKCLADAQSSYHILKPWWD) the chain is on the cytoplasmic side. The helical transmembrane segment at 26 to 46 (VFWYYITLIMLLVAVLAGALQ) threads the bilayer. The Extracellular portion of the chain corresponds to 47–119 (LTQSRVLCCL…YEKQLHWFAK (73 aa)). Intrachain disulfides connect Cys55/Cys304 and Cys109/Cys289. An N-linked (GlcNAc...) asparagine glycan is attached at Asn78. The chain crosses the membrane as a helical span at residues 120–140 (FFPYLVLLHTLIFAACSNFWL). Residues 141–261 (HYPSTSSRLE…DIIYRVYLKQ (121 aa)) lie on the Cytoplasmic side of the membrane. A phosphoserine mark is found at Ser186 and Ser196. Residues 262-282 (IIVKVILFVLIITYVPYFLTH) traverse the membrane as a helical segment. Residues 283–307 (ITLEIDCSVDVQAFTGYKRYQCVYS) are Extracellular-facing. Residues 308 to 328 (LAEIFKVLASFYVILVILYGL) form a helical membrane-spanning segment. The Cytoplasmic segment spans residues 329-803 (TSSYSLWWML…ERLQTCLDKC (475 aa)). 13 LRR repeats span residues 464–486 (NLKE…AFLE), 488–509 (NLKI…VFHL), 511–532 (NLKE…MQLE), 539–559 (NLRT…VTDL), 562–582 (SLQK…NNLK), 586–607 (NLKS…IFSL), 609–630 (NLHE…ISFQ), 634–655 (NLSC…IGAL), 657–678 (NLEQ…LFLC), 680–701 (KLHY…IQYL), 703–724 (NLQY…LFQC), 726–747 (KLQC…VGEL), and 749–771 (NLTH…EGCQ).

Belongs to the LRRC8 family. In terms of assembly, heterohexamer; oligomerizes with other LRRC8 proteins (LRRC8A, LRRC8C, LRRC8D and/or LRRC8E) to form a heterohexamer. In vivo, the subunit composition may depend primarily on expression levels, and heterooligomeric channels containing various proportions of the different LRRC8 proteins may coexist.

It is found in the cell membrane. The protein localises to the endoplasmic reticulum membrane. It carries out the reaction chloride(in) = chloride(out). The catalysed reaction is iodide(out) = iodide(in). It catalyses the reaction taurine(out) = taurine(in). Non-essential component of the volume-regulated anion channel (VRAC, also named VSOAC channel), an anion channel required to maintain a constant cell volume in response to extracellular or intracellular osmotic changes. The VRAC channel conducts iodide better than chloride and can also conduct organic osmolytes like taurine. Channel activity requires LRRC8A plus at least one other family member (LRRC8B, LRRC8C, LRRC8D or LRRC8E); channel characteristics depend on the precise subunit composition. This is Volume-regulated anion channel subunit LRRC8B from Homo sapiens (Human).